Reading from the N-terminus, the 196-residue chain is Ribosome maturation factor RimP (196 aa).

The tract at residues 176-196 is disordered; it reads ETNFDEVSTELETDTPSEGDQ. The segment covering 177 to 196 has biased composition (acidic residues); the sequence is TNFDEVSTELETDTPSEGDQ.

It belongs to the RimP family.

It is found in the cytoplasm. Required for maturation of 30S ribosomal subunits. This Roseobacter denitrificans (strain ATCC 33942 / OCh 114) (Erythrobacter sp. (strain OCh 114)) protein is Ribosome maturation factor RimP.